The following is a 268-amino-acid chain: uncharacterized protein (268 aa).

A helical membrane pass occupies residues 150-172; that stretch reads LYSIADFLAYTFTYFYLATVGLA.

Its subcellular location is the host membrane. This is an uncharacterized protein from Sulfolobus islandicus rod-shaped virus 1 (SIRV-1).